Here is a 176-residue protein sequence, read N- to C-terminus: NAD(P)H-quinone oxidoreductase subunit 6, chloroplastic (176 aa).

5 consecutive transmembrane segments (helical) span residues 10 to 30 (ILVLFGGFVLLLGGLGVVLLT), 33 to 53 (TFSAFSLGLVLVCISLFYILL), 60 to 80 (VAQLLIYVGAINVLIIFAVMF), 92 to 112 (FWTIGDGFTSLVCITIPFSLM), and 152 to 172 (FYLPFELISIILLVSLIGAIT).

Belongs to the complex I subunit 6 family. In terms of assembly, NDH is composed of at least 16 different subunits, 5 of which are encoded in the nucleus.

The protein localises to the plastid. Its subcellular location is the chloroplast thylakoid membrane. The catalysed reaction is a plastoquinone + NADH + (n+1) H(+)(in) = a plastoquinol + NAD(+) + n H(+)(out). The enzyme catalyses a plastoquinone + NADPH + (n+1) H(+)(in) = a plastoquinol + NADP(+) + n H(+)(out). Functionally, NDH shuttles electrons from NAD(P)H:plastoquinone, via FMN and iron-sulfur (Fe-S) centers, to quinones in the photosynthetic chain and possibly in a chloroplast respiratory chain. The immediate electron acceptor for the enzyme in this species is believed to be plastoquinone. Couples the redox reaction to proton translocation, and thus conserves the redox energy in a proton gradient. This is NAD(P)H-quinone oxidoreductase subunit 6, chloroplastic (ndhG) from Oryza nivara (Indian wild rice).